A 605-amino-acid chain; its full sequence is DNA mismatch repair protein MutL (605 aa).

The protein belongs to the DNA mismatch repair MutL/HexB family.

Its function is as follows. This protein is involved in the repair of mismatches in DNA. It is required for dam-dependent methyl-directed DNA mismatch repair. May act as a 'molecular matchmaker', a protein that promotes the formation of a stable complex between two or more DNA-binding proteins in an ATP-dependent manner without itself being part of a final effector complex. This chain is DNA mismatch repair protein MutL, found in Sinorhizobium medicae (strain WSM419) (Ensifer medicae).